Here is an 86-residue protein sequence, read N- to C-terminus: UPF0512 protein V (86 aa).

Belongs to the UPF0512 family.

This Dictyostelium discoideum (Social amoeba) protein is UPF0512 protein V.